Here is a 244-residue protein sequence, read N- to C-terminus: Pyridoxine 5'-phosphate synthase (244 aa).

Asparagine 7 contributes to the 3-amino-2-oxopropyl phosphate binding site. A 1-deoxy-D-xylulose 5-phosphate-binding site is contributed by 9–10 (DH). Arginine 18 is a 3-amino-2-oxopropyl phosphate binding site. Histidine 43 acts as the Proton acceptor in catalysis. 1-deoxy-D-xylulose 5-phosphate contacts are provided by arginine 45 and histidine 50. Glutamate 70 (proton acceptor) is an active-site residue. Residue threonine 100 coordinates 1-deoxy-D-xylulose 5-phosphate. Histidine 191 (proton donor) is an active-site residue. 3-amino-2-oxopropyl phosphate is bound by residues glycine 192 and 213–214 (GH).

The protein belongs to the PNP synthase family. In terms of assembly, homooctamer; tetramer of dimers.

It is found in the cytoplasm. The enzyme catalyses 3-amino-2-oxopropyl phosphate + 1-deoxy-D-xylulose 5-phosphate = pyridoxine 5'-phosphate + phosphate + 2 H2O + H(+). The protein operates within cofactor biosynthesis; pyridoxine 5'-phosphate biosynthesis; pyridoxine 5'-phosphate from D-erythrose 4-phosphate: step 5/5. Catalyzes the complicated ring closure reaction between the two acyclic compounds 1-deoxy-D-xylulose-5-phosphate (DXP) and 3-amino-2-oxopropyl phosphate (1-amino-acetone-3-phosphate or AAP) to form pyridoxine 5'-phosphate (PNP) and inorganic phosphate. In Laribacter hongkongensis (strain HLHK9), this protein is Pyridoxine 5'-phosphate synthase.